Reading from the N-terminus, the 431-residue chain is Adenylosuccinate synthetase (431 aa).

GTP contacts are provided by residues 13 to 19 (GDEGKGK) and 41 to 43 (GHT). The Proton acceptor role is filled by Asp14. Mg(2+) contacts are provided by Asp14 and Gly41. IMP contacts are provided by residues 14-17 (DEGK), 39-42 (NAGH), Thr130, Arg144, Gln225, Thr240, and Arg304. His42 serves as the catalytic Proton donor. 300–306 (ATTGRKR) is a binding site for substrate. Residues Arg306, 332–334 (KLD), and 415–417 (STG) contribute to the GTP site.

It belongs to the adenylosuccinate synthetase family. In terms of assembly, homodimer. The cofactor is Mg(2+).

The protein localises to the cytoplasm. It carries out the reaction IMP + L-aspartate + GTP = N(6)-(1,2-dicarboxyethyl)-AMP + GDP + phosphate + 2 H(+). It functions in the pathway purine metabolism; AMP biosynthesis via de novo pathway; AMP from IMP: step 1/2. Its function is as follows. Plays an important role in the de novo pathway of purine nucleotide biosynthesis. Catalyzes the first committed step in the biosynthesis of AMP from IMP. This chain is Adenylosuccinate synthetase, found in Shewanella loihica (strain ATCC BAA-1088 / PV-4).